A 561-amino-acid chain; its full sequence is Proline--tRNA ligase (561 aa).

It belongs to the class-II aminoacyl-tRNA synthetase family. ProS type 1 subfamily. As to quaternary structure, homodimer.

It localises to the cytoplasm. It catalyses the reaction tRNA(Pro) + L-proline + ATP = L-prolyl-tRNA(Pro) + AMP + diphosphate. Its function is as follows. Catalyzes the attachment of proline to tRNA(Pro) in a two-step reaction: proline is first activated by ATP to form Pro-AMP and then transferred to the acceptor end of tRNA(Pro). As ProRS can inadvertently accommodate and process non-cognate amino acids such as alanine and cysteine, to avoid such errors it has two additional distinct editing activities against alanine. One activity is designated as 'pretransfer' editing and involves the tRNA(Pro)-independent hydrolysis of activated Ala-AMP. The other activity is designated 'posttransfer' editing and involves deacylation of mischarged Ala-tRNA(Pro). The misacylated Cys-tRNA(Pro) is not edited by ProRS. The protein is Proline--tRNA ligase of Thermosipho africanus (strain TCF52B).